Here is a 163-residue protein sequence, read N- to C-terminus: uncharacterized protein (163 aa).

2 helical membrane-spanning segments follow: residues 7-27 (YLNE…CYIV) and 51-71 (LVIF…LVWF).

The protein resides in the cell membrane. This is an uncharacterized protein from Rickettsia prowazekii (strain Madrid E).